A 415-amino-acid chain; its full sequence is Tyrosine--tRNA ligase (415 aa).

Tyr-34 serves as a coordination point for L-tyrosine. The 'HIGH' region motif lies at 39 to 48 (PSADSLHLGN). Tyr-162 and Gln-166 together coordinate L-tyrosine. The 'KMSKS' region signature appears at 224–228 (KFGKS). Lys-227 is a binding site for ATP. The region spanning 346 to 413 (IKIIDLLNLA…KRNYFLILWN (68 aa)) is the S4 RNA-binding domain.

The protein belongs to the class-I aminoacyl-tRNA synthetase family. TyrS type 1 subfamily. As to quaternary structure, homodimer.

It localises to the cytoplasm. It carries out the reaction tRNA(Tyr) + L-tyrosine + ATP = L-tyrosyl-tRNA(Tyr) + AMP + diphosphate + H(+). Its function is as follows. Catalyzes the attachment of tyrosine to tRNA(Tyr) in a two-step reaction: tyrosine is first activated by ATP to form Tyr-AMP and then transferred to the acceptor end of tRNA(Tyr). The sequence is that of Tyrosine--tRNA ligase from Ureaplasma parvum serovar 3 (strain ATCC 27815 / 27 / NCTC 11736).